A 545-amino-acid polypeptide reads, in one-letter code: Phenylalanine--tRNA ligase beta subunit (545 aa).

The B5 domain maps to 268–343; the sequence is FLHKIQNVRE…MSIGYNNLEP (76 aa). Residues D321, D327, E330, and D331 each contribute to the Mg(2+) site.

This sequence belongs to the phenylalanyl-tRNA synthetase beta subunit family. Type 2 subfamily. In terms of assembly, tetramer of two alpha and two beta subunits. The cofactor is Mg(2+).

The protein resides in the cytoplasm. It catalyses the reaction tRNA(Phe) + L-phenylalanine + ATP = L-phenylalanyl-tRNA(Phe) + AMP + diphosphate + H(+). In Saccharolobus islandicus (strain M.14.25 / Kamchatka #1) (Sulfolobus islandicus), this protein is Phenylalanine--tRNA ligase beta subunit.